The primary structure comprises 414 residues: Serine--tRNA ligase (414 aa).

Residue 230 to 232 coordinates L-serine; it reads TAE. 261–263 serves as a coordination point for ATP; it reads RKE. Glu-284 contacts L-serine. 348 to 351 is an ATP binding site; it reads EISS. An L-serine-binding site is contributed by Ser-382.

This sequence belongs to the class-II aminoacyl-tRNA synthetase family. Type-1 seryl-tRNA synthetase subfamily. Homodimer. The tRNA molecule binds across the dimer.

It localises to the cytoplasm. It carries out the reaction tRNA(Ser) + L-serine + ATP = L-seryl-tRNA(Ser) + AMP + diphosphate + H(+). The enzyme catalyses tRNA(Sec) + L-serine + ATP = L-seryl-tRNA(Sec) + AMP + diphosphate + H(+). The protein operates within aminoacyl-tRNA biosynthesis; selenocysteinyl-tRNA(Sec) biosynthesis; L-seryl-tRNA(Sec) from L-serine and tRNA(Sec): step 1/1. Its function is as follows. Catalyzes the attachment of serine to tRNA(Ser). Is also able to aminoacylate tRNA(Sec) with serine, to form the misacylated tRNA L-seryl-tRNA(Sec), which will be further converted into selenocysteinyl-tRNA(Sec). The polypeptide is Serine--tRNA ligase (Nitratiruptor sp. (strain SB155-2)).